The primary structure comprises 327 residues: G protein pathway suppressor 2 (327 aa).

Positions 14 to 109 (MARALHRHIM…RRRKEQSDLT (96 aa)) form a coiled coil. Residues 26–65 (RERKRQEEEEVDKMMEQKMKEEQERRKKKEMEERMSLEET) are disordered. Glycyl lysine isopeptide (Lys-Gly) (interchain with G-Cter in SUMO1) cross-links involve residues K45 and K71. Positions 61–94 (SLEETKEQILKLEEKLLALQEEKHQLFLQLKKVL) are interaction with SUMO. 2 disordered regions span residues 177-208 (HGQF…SPSQ) and 253-327 (QKQM…FYHK). The span at 253 to 271 (QKQMEHANQQTGFSDSSSL) shows a compositional bias: polar residues. Asymmetric dimethylarginine is present on R312. Over residues 317 to 327 (QHSQNPRFYHK) the composition is skewed to polar residues. At R323 the chain carries Asymmetric dimethylarginine; alternate. Omega-N-methylarginine; alternate is present on R323.

In terms of assembly, component of the N-Cor repressor complex, at least composed of NCOR1, NCOR2, HDAC3, TBL1X, TBL1R, CORO2A and GPS2. Interacts (when sumoylated at Lys-71) with TBL1X; leading to protect GPS2 from degradation by the proteasome. Interacts with UBE2N; leading to inhibit UBE2N/Ubc13 activity. Interacts with TRAF1. Interacts with TRAF2. Interacts with TRAF6. Interacts with PPARG (when in the liganded conformation). Interacts with (sumoylated) NR1H2; interaction with sumoylated NR1H2 and NR5A2 onto hepatic acute phase protein promoters prevents N-Cor corepressor complex dissociation. Interacts with (sumoylated) NR5A2; interaction with sumoylated NR1H2 and NR5A2 onto hepatic acute phase protein promoters prevents N-Cor corepressor complex dissociation. Interacts with NR1H3. Interacts with RFX4. Interacts with ANKRD26. (Microbial infection) Interacts (via coiled coil domain) with hepatitis C virus (HCV) NS5A. Sumoylation regulates its subcellular location. Sumoylation at Lys-45 and Lys-71 regulates the shuttling between the cytoplasm and the nucleus. Sumoylation at Lys-71 is required for interaction with TBL1X. Sumoylated at Lys-45 and Lys-71 in mitochondrion. Desumoylation by SENP1 leads to relocation from the mitochondria to the nucleus. Post-translationally, ubiquitinated at the C-terminus by SIAH2; leading to its degradation by the proteasome. Interaction with TBL1X and methylation at Arg-323 protect GPS2 against ubiquitination and degradation. In terms of processing, methylated at Arg-312 and Arg-323 by PRMT6. Methylation at Arg-323 protects from degradation by the proteasome. As to expression, widely expressed.

It is found in the nucleus. The protein localises to the mitochondrion. It localises to the cytoplasm. Its subcellular location is the cytosol. In terms of biological role, key regulator of inflammation, lipid metabolism and mitochondrion homeostasis that acts by inhibiting the activity of the ubiquitin-conjugating enzyme UBE2N/Ubc13, thereby inhibiting 'Lys-63'-linked ubiquitination. In the nucleus, can both acts as a corepressor and coactivator of transcription, depending on the context. Acts as a transcription coactivator in adipocytes by promoting the recruitment of PPARG to promoters: acts by inhibiting the activity of the ubiquitin-conjugating enzyme UBE2N/Ubc13, leading to stabilization of KDM4A and subsequent histone H3 'Lys-9' (H3K9) demethylation. Promotes cholesterol efflux by acting as a transcription coactivator. Acts as a regulator of B-cell development by inhibiting UBE2N/Ubc13, thereby restricting the activation of Toll-like receptors (TLRs) and B-cell antigen receptors (BCRs) signaling pathways. Acts as a key mediator of mitochondrial stress response: in response to mitochondrial depolarization, relocates from the mitochondria to the nucleus following desumoylation and specifically promotes expression of nuclear-encoded mitochondrial genes. Promotes transcription of nuclear-encoded mitochondrial genes by inhibiting UBE2N/Ubc13. Can also act as a corepressor as part of the N-Cor repressor complex by repressing active PPARG. Plays an anti-inflammatory role in macrophages and is required for insulin sensitivity by acting as a corepressor. Plays an anti-inflammatory role during the hepatic acute phase response by interacting with sumoylated NR1H2 and NR5A2 proteins, thereby preventing N-Cor corepressor complex dissociation. In the cytosol, also plays a non-transcriptional role by regulating insulin signaling and pro-inflammatory pathways. In the cytoplasm, acts as a negative regulator of inflammation by inhibiting the pro-inflammatory TNF-alpha pathway; acts by repressing UBE2N/Ubc13 activity. In the cytoplasm of adipocytes, restricts the activation of insulin signaling via inhibition of UBE2N/Ubc13-mediated ubiquitination of AKT. Able to suppress G-protein- and mitogen-activated protein kinase-mediated signal transduction. Acts as a tumor-suppressor in liposarcoma. Its function is as follows. (Microbial infection) Required for efficient replication of hepatitis C virus (HCV) by promoting the interaction between VAPA and HCV virus protein NS5A. This Homo sapiens (Human) protein is G protein pathway suppressor 2.